Consider the following 132-residue polypeptide: Agouti-signaling protein (132 aa).

The N-terminal stretch at 1–22 (MDVTRLLLATLLVFLCFFTANS) is a signal peptide. N-linked (GlcNAc...) asparagine glycosylation is present at N39. The segment at 61–87 (QIGRKEAEKKRSSKKEASMKKVARPRT) is disordered. The segment covering 63–79 (GRKEAEKKRSSKKEASM) has biased composition (basic and acidic residues). Disulfide bonds link C93–C108, C100–C114, C107–C125, C111–C132, and C116–C123. The Agouti domain occupies 93-132 (CVATRNSCKPPAPACCDPCASCQCRFFRSACSCRVLSLNC).

It localises to the secreted. Functionally, involved in the regulation of melanogenesis. The binding of ASP to MC1R precludes alpha-MSH initiated signaling and thus blocks production of cAMP, leading to a down-regulation of eumelanogenesis (brown/black pigment) and thus increasing synthesis of pheomelanin (yellow/red pigment). The sequence is that of Agouti-signaling protein (ASIP) from Gorilla gorilla gorilla (Western lowland gorilla).